The primary structure comprises 520 residues: Transactivator/viroplasmin protein (520 aa).

2 disordered regions span residues 103-126 (SDFL…SVAP) and 487-520 (EDAS…KQVD).

Belongs to the caulimoviridae viroplasmin family.

The protein resides in the host cytoplasm. Enhances the ribosomal termination-reinitiation event leading to the translation of major open reading frames on the polycistronic viral RNAs. This Arabidopsis thaliana (Mouse-ear cress) protein is Transactivator/viroplasmin protein.